A 274-amino-acid polypeptide reads, in one-letter code: tRNA-cytidine(32) 2-sulfurtransferase (274 aa).

Residues 40–45 (SGGKDS) carry the PP-loop motif motif. Cysteine 115, cysteine 118, and cysteine 206 together coordinate [4Fe-4S] cluster.

Belongs to the TtcA family. As to quaternary structure, homodimer. Mg(2+) is required as a cofactor. [4Fe-4S] cluster serves as cofactor.

It localises to the cytoplasm. It catalyses the reaction cytidine(32) in tRNA + S-sulfanyl-L-cysteinyl-[cysteine desulfurase] + AH2 + ATP = 2-thiocytidine(32) in tRNA + L-cysteinyl-[cysteine desulfurase] + A + AMP + diphosphate + H(+). It functions in the pathway tRNA modification. In terms of biological role, catalyzes the ATP-dependent 2-thiolation of cytidine in position 32 of tRNA, to form 2-thiocytidine (s(2)C32). The sulfur atoms are provided by the cysteine/cysteine desulfurase (IscS) system. This is tRNA-cytidine(32) 2-sulfurtransferase from Pseudomonas putida (strain GB-1).